A 310-amino-acid chain; its full sequence is Ornithine carbamoyltransferase (310 aa).

Residues 58-61 (STRT), Q85, R109, and 136-139 (HPCQ) contribute to the carbamoyl phosphate site. L-ornithine-binding positions include N167, D227, and 231–232 (SM). Residues 266-267 (CL) and R294 contribute to the carbamoyl phosphate site.

The protein belongs to the aspartate/ornithine carbamoyltransferase superfamily. OTCase family.

The protein localises to the cytoplasm. The enzyme catalyses carbamoyl phosphate + L-ornithine = L-citrulline + phosphate + H(+). It participates in amino-acid biosynthesis; L-arginine biosynthesis; L-arginine from L-ornithine and carbamoyl phosphate: step 1/3. In terms of biological role, reversibly catalyzes the transfer of the carbamoyl group from carbamoyl phosphate (CP) to the N(epsilon) atom of ornithine (ORN) to produce L-citrulline. The polypeptide is Ornithine carbamoyltransferase (Rhodopseudomonas palustris (strain ATCC BAA-98 / CGA009)).